Consider the following 192-residue polypeptide: Pyridoxal 5'-phosphate synthase subunit PdxT (192 aa).

Residue 50–52 (GES) participates in L-glutamine binding. Cysteine 82 functions as the Nucleophile in the catalytic mechanism. Residues arginine 109 and 136–137 (IR) contribute to the L-glutamine site. Catalysis depends on charge relay system residues histidine 172 and glutamate 174.

It belongs to the glutaminase PdxT/SNO family. In the presence of PdxS, forms a dodecamer of heterodimers. Only shows activity in the heterodimer.

It catalyses the reaction aldehydo-D-ribose 5-phosphate + D-glyceraldehyde 3-phosphate + L-glutamine = pyridoxal 5'-phosphate + L-glutamate + phosphate + 3 H2O + H(+). The catalysed reaction is L-glutamine + H2O = L-glutamate + NH4(+). Its pathway is cofactor biosynthesis; pyridoxal 5'-phosphate biosynthesis. In terms of biological role, catalyzes the hydrolysis of glutamine to glutamate and ammonia as part of the biosynthesis of pyridoxal 5'-phosphate. The resulting ammonia molecule is channeled to the active site of PdxS. The polypeptide is Pyridoxal 5'-phosphate synthase subunit PdxT (Haemophilus influenzae (strain PittGG)).